The chain runs to 383 residues: Succinyl-diaminopimelate desuccinylase (383 aa).

Position 69 (His-69) interacts with Zn(2+). Asp-71 is an active-site residue. Position 103 (Asp-103) interacts with Zn(2+). The Proton acceptor role is filled by Glu-137. Residues Glu-138, Glu-166, and His-357 each coordinate Zn(2+).

The protein belongs to the peptidase M20A family. DapE subfamily. In terms of assembly, homodimer. Requires Zn(2+) as cofactor. Co(2+) is required as a cofactor.

It catalyses the reaction N-succinyl-(2S,6S)-2,6-diaminopimelate + H2O = (2S,6S)-2,6-diaminopimelate + succinate. Its pathway is amino-acid biosynthesis; L-lysine biosynthesis via DAP pathway; LL-2,6-diaminopimelate from (S)-tetrahydrodipicolinate (succinylase route): step 3/3. Its function is as follows. Catalyzes the hydrolysis of N-succinyl-L,L-diaminopimelic acid (SDAP), forming succinate and LL-2,6-diaminopimelate (DAP), an intermediate involved in the bacterial biosynthesis of lysine and meso-diaminopimelic acid, an essential component of bacterial cell walls. In Rickettsia typhi (strain ATCC VR-144 / Wilmington), this protein is Succinyl-diaminopimelate desuccinylase.